Reading from the N-terminus, the 231-residue chain is Large ribosomal subunit protein uL1 (231 aa).

The protein belongs to the universal ribosomal protein uL1 family. As to quaternary structure, part of the 50S ribosomal subunit.

Binds directly to 23S rRNA. The L1 stalk is quite mobile in the ribosome, and is involved in E site tRNA release. Its function is as follows. Protein L1 is also a translational repressor protein, it controls the translation of the L11 operon by binding to its mRNA. This chain is Large ribosomal subunit protein uL1, found in Halorhodospira halophila (strain DSM 244 / SL1) (Ectothiorhodospira halophila (strain DSM 244 / SL1)).